We begin with the raw amino-acid sequence, 393 residues long: Bifunctional enzyme IspD/IspF (393 aa).

The segment at 1–234 (MTISQRTAAI…ARLAAQLGDI (234 aa)) is 2-C-methyl-D-erythritol 4-phosphate cytidylyltransferase. A 2-C-methyl-D-erythritol 2,4-cyclodiphosphate synthase region spans residues 235-393 (RTGTGYDVHA…SATIRLPWSA (159 aa)). A divalent metal cation contacts are provided by Asp-241 and His-243. Residues 241-243 (DVH) and 267-268 (HS) contribute to the 4-CDP-2-C-methyl-D-erythritol 2-phosphate site. Residue His-275 coordinates a divalent metal cation. 4-CDP-2-C-methyl-D-erythritol 2-phosphate is bound by residues 289–291 (DIG), 365–368 (TTSE), Phe-372, and Arg-375.

The protein in the N-terminal section; belongs to the IspD/TarI cytidylyltransferase family. IspD subfamily. In the C-terminal section; belongs to the IspF family. A divalent metal cation is required as a cofactor.

It carries out the reaction 2-C-methyl-D-erythritol 4-phosphate + CTP + H(+) = 4-CDP-2-C-methyl-D-erythritol + diphosphate. The enzyme catalyses 4-CDP-2-C-methyl-D-erythritol 2-phosphate = 2-C-methyl-D-erythritol 2,4-cyclic diphosphate + CMP. Its pathway is isoprenoid biosynthesis; isopentenyl diphosphate biosynthesis via DXP pathway; isopentenyl diphosphate from 1-deoxy-D-xylulose 5-phosphate: step 2/6. It functions in the pathway isoprenoid biosynthesis; isopentenyl diphosphate biosynthesis via DXP pathway; isopentenyl diphosphate from 1-deoxy-D-xylulose 5-phosphate: step 4/6. Its function is as follows. Bifunctional enzyme that catalyzes the formation of 4-diphosphocytidyl-2-C-methyl-D-erythritol from CTP and 2-C-methyl-D-erythritol 4-phosphate (MEP) (IspD), and catalyzes the conversion of 4-diphosphocytidyl-2-C-methyl-D-erythritol 2-phosphate (CDP-ME2P) to 2-C-methyl-D-erythritol 2,4-cyclodiphosphate (ME-CPP) with a corresponding release of cytidine 5-monophosphate (CMP) (IspF). The sequence is that of Bifunctional enzyme IspD/IspF from Bradyrhizobium sp. (strain BTAi1 / ATCC BAA-1182).